The following is a 155-amino-acid chain: Large ribosomal subunit protein uL30 (155 aa).

The protein belongs to the universal ribosomal protein uL30 family. As to quaternary structure, part of the 50S ribosomal subunit.

In Pyrococcus horikoshii (strain ATCC 700860 / DSM 12428 / JCM 9974 / NBRC 100139 / OT-3), this protein is Large ribosomal subunit protein uL30.